Consider the following 186-residue polypeptide: MSKTDWNASGPSRPSPSAHWPSGKLWQHGQKYQTTQDRSRPPARRRRQALRVSANHASQQLDQLKAVHLASAVRDLERAMTTLKPWDSPQEISRHQALGYSVIMFMITAVKRLRESKMLTLSWFNQALMVTAPSQEETMNLKTAMWILANLIPRDMLSLTGDLLPSLWGSGLLMLKLQKEERSTSS.

The segment covering 1–12 (MSKTDWNASGPS) has biased composition (polar residues). The tract at residues 1 to 43 (MSKTDWNASGPSRPSPSAHWPSGKLWQHGQKYQTTQDRSRPPA) is disordered.

This sequence belongs to the morbillivirus protein C family. As to quaternary structure, interacts with the phosphoprotein (via C-terminus); this interaction allows C to associate with the ribonucleocapsid.

It is found in the host nucleus. It localises to the host cytoplasmic vesicle. In terms of biological role, ribonucleocapsid-associated protein that interacts with the phosphoprotein (P), thereby increasing replication accuracy and processivity of the polymerase complex. The polypeptide is Protein C (P/V/C) (Homo sapiens (Human)).